Here is a 61-residue protein sequence, read N- to C-terminus: Protein translocase subunit SecE (61 aa).

The chain crosses the membrane as a helical span at residues 39-59; that stretch reads VGIIIIGLIGFILSIVSQVLF.

This sequence belongs to the SecE/SEC61-gamma family. In terms of assembly, component of the Sec protein translocase complex. Heterotrimer consisting of SecY (alpha), SecG (beta) and SecE (gamma) subunits. The heterotrimers can form oligomers, although 1 heterotrimer is thought to be able to translocate proteins. Interacts with the ribosome. May interact with SecDF, and other proteins may be involved.

The protein resides in the cell membrane. Functionally, essential subunit of the Sec protein translocation channel SecYEG. Clamps together the 2 halves of SecY. May contact the channel plug during translocation. The chain is Protein translocase subunit SecE from Methanosphaera stadtmanae (strain ATCC 43021 / DSM 3091 / JCM 11832 / MCB-3).